Consider the following 153-residue polypeptide: MLAFNFFGATEGGLFDINATLPLMAIQVVALTYILNSLFFKPVGKVVEKREKFVSDNIIEAKNKLSEVEKLEADLLTQLQSARTEAQRIVSEAENESDKLYKEALELANNEANASKEKARLEIESQTSAARDQLSKQADDLSELIVNRLILEK.

Residues Leu23–Phe40 traverse the membrane as a helical segment.

It belongs to the ATPase B chain family. In terms of assembly, F-type ATPases have 2 components, F(1) - the catalytic core - and F(0) - the membrane proton channel. F(1) has five subunits: alpha(3), beta(3), gamma(1), delta(1), epsilon(1). F(0) has four main subunits: a(1), b(1), b'(1) and c(10-14). The alpha and beta chains form an alternating ring which encloses part of the gamma chain. F(1) is attached to F(0) by a central stalk formed by the gamma and epsilon chains, while a peripheral stalk is formed by the delta, b and b' chains.

It localises to the cellular thylakoid membrane. Functionally, f(1)F(0) ATP synthase produces ATP from ADP in the presence of a proton or sodium gradient. F-type ATPases consist of two structural domains, F(1) containing the extramembraneous catalytic core and F(0) containing the membrane proton channel, linked together by a central stalk and a peripheral stalk. During catalysis, ATP synthesis in the catalytic domain of F(1) is coupled via a rotary mechanism of the central stalk subunits to proton translocation. Component of the F(0) channel, it forms part of the peripheral stalk, linking F(1) to F(0). The b'-subunit is a diverged and duplicated form of b found in plants and photosynthetic bacteria. The polypeptide is ATP synthase subunit b' (Prochlorococcus marinus (strain MIT 9215)).